Here is a 987-residue protein sequence, read N- to C-terminus: ATP-dependent 6-phosphofructokinase subunit alpha (987 aa).

The N-terminal catalytic PFK domain 1 stretch occupies residues 1 to 580; the sequence is MQSQDSCYGV…LYENFLSTTV (580 aa). The residue at position 3 (serine 3) is a Phosphoserine. Residue lysine 89 forms a Glycyl lysine isopeptide (Lys-Gly) (interchain with G-Cter in ubiquitin) linkage. Phosphoserine is present on residues serine 166, serine 179, serine 185, serine 189, and serine 192. Glycine 215 contributes to the ATP binding site. Position 217 is a phosphoserine (serine 217). ATP-binding positions include 278 to 279 and 308 to 311; these read RS and GDGS. Residue aspartate 309 participates in Mg(2+) binding. Beta-D-fructose 6-phosphate is bound by residues 354 to 356, arginine 391, and 398 to 400; these read SID and MGR. Residue aspartate 356 is the Proton acceptor of the active site. Threonine 450 bears the Phosphothreonine mark. Residues glutamate 455, lysine 482, and 488 to 491 contribute to the beta-D-fructose 6-phosphate site; that span reads HVQR. Positions 581 to 594 are interdomain linker; that stretch reads KDDGSELLPVSDRL. Positions 595–987 are C-terminal regulatory PFK domain 2; sequence NIGIVHVGAP…EVAALAAENK (393 aa). Lysine 625 participates in a covalent cross-link: Glycyl lysine isopeptide (Lys-Gly) (interchain with G-Cter in ubiquitin). Beta-D-fructose 2,6-bisphosphate contacts are provided by residues arginine 665, 722–726, arginine 760, 767–769, glutamate 827, arginine 853, 859–862, and arginine 952; these read TVSNN, QGG, and HVQQ.

Belongs to the phosphofructokinase type A (PFKA) family. ATP-dependent PFK group I subfamily. Eukaryotic two domain clade 'E' sub-subfamily. As to quaternary structure, heterooctamer of 4 alpha and 4 beta chains. Requires Mg(2+) as cofactor.

The protein resides in the cytoplasm. Its subcellular location is the mitochondrion outer membrane. The enzyme catalyses beta-D-fructose 6-phosphate + ATP = beta-D-fructose 1,6-bisphosphate + ADP + H(+). It participates in carbohydrate degradation; glycolysis; D-glyceraldehyde 3-phosphate and glycerone phosphate from D-glucose: step 3/4. With respect to regulation, allosterically activated by ADP, AMP, or fructose 2,6-bisphosphate, and allosterically inhibited by ATP or citrate. Its function is as follows. Catalyzes the phosphorylation of D-fructose 6-phosphate to fructose 1,6-bisphosphate by ATP, the first committing step of glycolysis. The sequence is that of ATP-dependent 6-phosphofructokinase subunit alpha (PFK1) from Saccharomyces cerevisiae (strain ATCC 204508 / S288c) (Baker's yeast).